A 502-amino-acid polypeptide reads, in one-letter code: Glycerol kinase (502 aa).

Thr16 lines the ADP pocket. Residues Thr16, Thr17, and Ser18 each contribute to the ATP site. Thr16 provides a ligand contact to sn-glycerol 3-phosphate. Residue Arg20 participates in ADP binding. Residues Arg86, Glu87, Tyr138, and Asp247 each contribute to the sn-glycerol 3-phosphate site. Positions 86, 87, 138, 247, and 248 each coordinate glycerol. Thr269 and Gly312 together coordinate ADP. Residues Thr269, Gly312, Gln316, and Gly413 each coordinate ATP. ADP contacts are provided by Gly413 and Asn417.

It belongs to the FGGY kinase family.

It carries out the reaction glycerol + ATP = sn-glycerol 3-phosphate + ADP + H(+). It participates in polyol metabolism; glycerol degradation via glycerol kinase pathway; sn-glycerol 3-phosphate from glycerol: step 1/1. Inhibited by fructose 1,6-bisphosphate (FBP). Key enzyme in the regulation of glycerol uptake and metabolism. Catalyzes the phosphorylation of glycerol to yield sn-glycerol 3-phosphate. The polypeptide is Glycerol kinase (Dechloromonas aromatica (strain RCB)).